The sequence spans 198 residues: Large ribosomal subunit protein uL13B (198 aa).

Serine 2 is subject to N-acetylserine; partial. At serine 43 the chain carries Phosphoserine. Lysine 176 participates in a covalent cross-link: Glycyl lysine isopeptide (Lys-Gly) (interchain with G-Cter in ubiquitin). A phosphoserine mark is found at serine 181, serine 185, and serine 187.

It belongs to the universal ribosomal protein uL13 family. Component of the large ribosomal subunit (LSU). Mature yeast ribosomes consist of a small (40S) and a large (60S) subunit. The 40S small subunit contains 1 molecule of ribosomal RNA (18S rRNA) and 33 different proteins (encoded by 57 genes). The large 60S subunit contains 3 rRNA molecules (25S, 5.8S and 5S rRNA) and 46 different proteins (encoded by 81 genes). In terms of processing, N-terminally acetylated by acetyltransferase NatA.

The protein resides in the cytoplasm. Component of the ribosome, a large ribonucleoprotein complex responsible for the synthesis of proteins in the cell. The small ribosomal subunit (SSU) binds messenger RNAs (mRNAs) and translates the encoded message by selecting cognate aminoacyl-transfer RNA (tRNA) molecules. The large subunit (LSU) contains the ribosomal catalytic site termed the peptidyl transferase center (PTC), which catalyzes the formation of peptide bonds, thereby polymerizing the amino acids delivered by tRNAs into a polypeptide chain. The nascent polypeptides leave the ribosome through a tunnel in the LSU and interact with protein factors that function in enzymatic processing, targeting, and the membrane insertion of nascent chains at the exit of the ribosomal tunnel. This chain is Large ribosomal subunit protein uL13B, found in Saccharomyces cerevisiae (strain ATCC 204508 / S288c) (Baker's yeast).